A 198-amino-acid polypeptide reads, in one-letter code: Ribonuclease HII (198 aa).

In terms of domain architecture, RNase H type-2 spans 10–198 (QLVAGVDEVG…PVKRALGLAS (189 aa)). A divalent metal cation contacts are provided by D16, E17, and D108.

This sequence belongs to the RNase HII family. It depends on Mn(2+) as a cofactor. Requires Mg(2+) as cofactor.

Its subcellular location is the cytoplasm. The enzyme catalyses Endonucleolytic cleavage to 5'-phosphomonoester.. Endonuclease that specifically degrades the RNA of RNA-DNA hybrids. In Shigella boydii serotype 4 (strain Sb227), this protein is Ribonuclease HII.